A 319-amino-acid chain; its full sequence is Thioredoxin reductase (319 aa).

FAD is bound at residue 37-44 (ERGVPGGQ). A disulfide bridge connects residues cysteine 136 and cysteine 139. Residue 279–288 (DVRAKSLRQI) participates in FAD binding.

Belongs to the class-II pyridine nucleotide-disulfide oxidoreductase family. In terms of assembly, homodimer. It depends on FAD as a cofactor.

The protein resides in the cytoplasm. It catalyses the reaction [thioredoxin]-dithiol + NADP(+) = [thioredoxin]-disulfide + NADPH + H(+). This chain is Thioredoxin reductase (trxB), found in Listeria monocytogenes serovar 1/2a (strain ATCC BAA-679 / EGD-e).